The sequence spans 296 residues: 33 kDa chaperonin (296 aa).

2 disulfides stabilise this stretch: C236-C238 and C269-C272.

Belongs to the HSP33 family. In terms of processing, under oxidizing conditions two disulfide bonds are formed involving the reactive cysteines. Under reducing conditions zinc is bound to the reactive cysteines and the protein is inactive.

The protein resides in the cytoplasm. Its function is as follows. Redox regulated molecular chaperone. Protects both thermally unfolding and oxidatively damaged proteins from irreversible aggregation. Plays an important role in the bacterial defense system toward oxidative stress. This is 33 kDa chaperonin from Lactobacillus helveticus (strain DPC 4571).